The sequence spans 134 residues: Large ribosomal subunit protein uL16c (134 aa).

The tract at residues 1 to 22 (MLSPKRTRFRKQHRGRMKGISH) is disordered.

It belongs to the universal ribosomal protein uL16 family. In terms of assembly, part of the 50S ribosomal subunit.

Its subcellular location is the plastid. It is found in the chloroplast. The polypeptide is Large ribosomal subunit protein uL16c (Nicotiana tabacum (Common tobacco)).